Consider the following 236-residue polypeptide: Purine nucleoside phosphorylase DeoD-type (236 aa).

Histidine 5 provides a ligand contact to a purine D-ribonucleoside. Residues glycine 21, arginine 25, arginine 44, and 88-91 (RVGT) contribute to the phosphate site. A purine D-ribonucleoside-binding positions include 180 to 182 (DME) and 204 to 205 (SD). Aspartate 205 functions as the Proton donor in the catalytic mechanism.

The protein belongs to the PNP/UDP phosphorylase family. As to quaternary structure, homohexamer; trimer of homodimers.

The enzyme catalyses a purine D-ribonucleoside + phosphate = a purine nucleobase + alpha-D-ribose 1-phosphate. It catalyses the reaction a purine 2'-deoxy-D-ribonucleoside + phosphate = a purine nucleobase + 2-deoxy-alpha-D-ribose 1-phosphate. Functionally, catalyzes the reversible phosphorolytic breakdown of the N-glycosidic bond in the beta-(deoxy)ribonucleoside molecules, with the formation of the corresponding free purine bases and pentose-1-phosphate. This is Purine nucleoside phosphorylase DeoD-type from Buchnera aphidicola subsp. Schizaphis graminum (strain Sg).